The sequence spans 106 residues: uncharacterized protein (106 aa).

Transmembrane regions (helical) follow at residues 4-24 (LPVV…IGFL), 27-47 (MLLR…LFII), and 78-98 (VLIL…INML).

The protein localises to the cell membrane. This is an uncharacterized protein from Bacillus subtilis (strain 168).